The sequence spans 563 residues: MSDFVDRVTVHVKGGDGGNGSAGIRREKYKPLAGPNGGNGGDGGSVVFVADRNATSLLDYRFMPHRVAGSGTMGLGDNKDGSKGEDLILPVPCGTVVFEARGEQGKAKHPGAQLADLRHEGDRCVVAQGGAGGLGNIALANKTRRAPGFALLGELGEERDVILELKSIADVALVGFPSAGKSSLIAAMSSVKPKIADYPFTTLVPNLGVVIAGDSRYTIADVPGLIPGASEGKGLGLEFLRHIERTEIIAHVIDCATLEPDRDPMSDYHALENELALYADKLELPLGAIPIPERPRIVILNKIDVPEAKELAEFVRPEFEKLGLKVFEISTASHEGLKELNFALSALVHEMREEVANREQAEEEARVVIKPLETKGRRPRRADEGGSALEFTVERRELGNGEVFFEVRGVKPERWVMQTNFDNDEAVGYLADRLAKLGVEDELRRKGAHPGDEVRIGRGARMVEFDWDPTISAGAEMLDGSNLGARGKDLRLEELDPRTHRRSNAERRAQYHEMMDARAAVRDAMMAERKAGHWADPTVDDDRHDETSLFGHGESSEDGETEE.

In terms of domain architecture, Obg spans 2-168; the sequence is SDFVDRVTVH…RDVILELKSI (167 aa). The OBG-type G domain occupies 169–349; the sequence is ADVALVGFPS…LNFALSALVH (181 aa). GTP contacts are provided by residues 175–182, 200–204, 221–224, 301–304, and 330–332; these read GFPSAGKS, FTTLV, DVPG, NKID, and STA. Mg(2+) is bound by residues Ser-182 and Thr-202. The 87-residue stretch at 383–469 folds into the OCT domain; that stretch reads DEGGSALEFT…ARMVEFDWDP (87 aa). A disordered region spans residues 529–563; that stretch reads RKAGHWADPTVDDDRHDETSLFGHGESSEDGETEE.

Belongs to the TRAFAC class OBG-HflX-like GTPase superfamily. OBG GTPase family. Monomer. Mg(2+) is required as a cofactor.

Its subcellular location is the cytoplasm. In terms of biological role, an essential GTPase which binds GTP, GDP and possibly (p)ppGpp with moderate affinity, with high nucleotide exchange rates and a fairly low GTP hydrolysis rate. Plays a role in control of the cell cycle, stress response, ribosome biogenesis and in those bacteria that undergo differentiation, in morphogenesis control. The chain is GTPase Obg from Bifidobacterium longum (strain DJO10A).